The chain runs to 171 residues: MSPRVLGALVAALTLAADQANKLWLIFVYGIEQRQPIALAPFLDVVYAKNPGISYSLLSARTDFQRYALLGLTLAATIFMILWLWRSTSKLIACALGLIIGGALGNAYDRAAYGFVADFYHFHVGSFSWYVFNLADAAIVAGVALLLYDSLFSARGAGTGGKSRGEGASAL.

Transmembrane regions (helical) follow at residues 67–87 and 88–108; these read YALL…LWRS and TSKL…GNAY. Active-site residues include aspartate 118 and aspartate 136. A helical membrane pass occupies residues 127–147; sequence FSWYVFNLADAAIVAGVALLL.

Belongs to the peptidase A8 family.

The protein localises to the cell inner membrane. It catalyses the reaction Release of signal peptides from bacterial membrane prolipoproteins. Hydrolyzes -Xaa-Yaa-Zaa-|-(S,diacylglyceryl)Cys-, in which Xaa is hydrophobic (preferably Leu), and Yaa (Ala or Ser) and Zaa (Gly or Ala) have small, neutral side chains.. Its pathway is protein modification; lipoprotein biosynthesis (signal peptide cleavage). This protein specifically catalyzes the removal of signal peptides from prolipoproteins. This Methylocella silvestris (strain DSM 15510 / CIP 108128 / LMG 27833 / NCIMB 13906 / BL2) protein is Lipoprotein signal peptidase.